A 250-amino-acid chain; its full sequence is Triosephosphate isomerase (250 aa).

Position 9 to 11 (9 to 11 (NWK)) interacts with substrate. Residue His-95 is the Electrophile of the active site. Residue Glu-167 is the Proton acceptor of the active site. Substrate-binding positions include Gly-173, Ser-213, and 234–235 (GG).

The protein belongs to the triosephosphate isomerase family. As to quaternary structure, homodimer.

It is found in the cytoplasm. It carries out the reaction D-glyceraldehyde 3-phosphate = dihydroxyacetone phosphate. The protein operates within carbohydrate biosynthesis; gluconeogenesis. It functions in the pathway carbohydrate degradation; glycolysis; D-glyceraldehyde 3-phosphate from glycerone phosphate: step 1/1. In terms of biological role, involved in the gluconeogenesis. Catalyzes stereospecifically the conversion of dihydroxyacetone phosphate (DHAP) to D-glyceraldehyde-3-phosphate (G3P). The protein is Triosephosphate isomerase of Chloroflexus aurantiacus (strain ATCC 29366 / DSM 635 / J-10-fl).